The primary structure comprises 473 residues: Photosystem II CP43 reaction center protein (473 aa).

A propeptide spanning residues 1 to 14 (MKTLYSLRRFYHVE) is cleaved from the precursor. The residue at position 15 (Thr15) is an N-acetylthreonine. Thr15 is modified (phosphothreonine). A run of 5 helical transmembrane segments spans residues 69 to 93 (LFEVAHFVPEKPMYEQGLILLPHLA), 134 to 155 (LLGPETLEESFPFFGYVWKDRN), 178 to 200 (KALYFGGVYDTWAPGGGDVRKIT), 255 to 275 (KPFAWARRALVWSGEAYLSYS), and 291 to 312 (WFNNTAYPSEFYGPTGPEASQA). [CaMn4O5] cluster is bound at residue Glu367. A helical membrane pass occupies residues 447-471 (RARAAAAGFEKGIDRDFEPVLSMTP).

The protein belongs to the PsbB/PsbC family. PsbC subfamily. PSII is composed of 1 copy each of membrane proteins PsbA, PsbB, PsbC, PsbD, PsbE, PsbF, PsbH, PsbI, PsbJ, PsbK, PsbL, PsbM, PsbT, PsbX, PsbY, PsbZ, Psb30/Ycf12, at least 3 peripheral proteins of the oxygen-evolving complex and a large number of cofactors. It forms dimeric complexes. Binds multiple chlorophylls and provides some of the ligands for the Ca-4Mn-5O cluster of the oxygen-evolving complex. It may also provide a ligand for a Cl- that is required for oxygen evolution. PSII binds additional chlorophylls, carotenoids and specific lipids. is required as a cofactor.

The protein localises to the plastid. The protein resides in the chloroplast thylakoid membrane. Its function is as follows. One of the components of the core complex of photosystem II (PSII). It binds chlorophyll and helps catalyze the primary light-induced photochemical processes of PSII. PSII is a light-driven water:plastoquinone oxidoreductase, using light energy to abstract electrons from H(2)O, generating O(2) and a proton gradient subsequently used for ATP formation. The sequence is that of Photosystem II CP43 reaction center protein from Atropa belladonna (Belladonna).